The primary structure comprises 200 residues: Glycerol-3-phosphate acyltransferase (200 aa).

The next 5 membrane-spanning stretches (helical) occupy residues 2-22 (FNIP…AVIV), 51-71 (KAAV…VLLA), 84-104 (AIAA…FFGF), 114-134 (LGVL…IWLV), and 159-179 (FFMP…LVLF).

It belongs to the PlsY family. In terms of assembly, probably interacts with PlsX.

The protein localises to the cell inner membrane. It carries out the reaction an acyl phosphate + sn-glycerol 3-phosphate = a 1-acyl-sn-glycero-3-phosphate + phosphate. It participates in lipid metabolism; phospholipid metabolism. Its function is as follows. Catalyzes the transfer of an acyl group from acyl-phosphate (acyl-PO(4)) to glycerol-3-phosphate (G3P) to form lysophosphatidic acid (LPA). This enzyme utilizes acyl-phosphate as fatty acyl donor, but not acyl-CoA or acyl-ACP. This Neisseria meningitidis serogroup C / serotype 2a (strain ATCC 700532 / DSM 15464 / FAM18) protein is Glycerol-3-phosphate acyltransferase.